A 429-amino-acid chain; its full sequence is 3-phosphoshikimate 1-carboxyvinyltransferase (429 aa).

3-phosphoshikimate contacts are provided by Lys-20, Ser-21, and Arg-25. Lys-20 serves as a coordination point for phosphoenolpyruvate. Phosphoenolpyruvate-binding residues include Gly-89 and Arg-118. The 3-phosphoshikimate site is built by Ser-164, Ser-165, Gln-166, Ser-192, Asp-311, and Lys-338. Gln-166 is a phosphoenolpyruvate binding site. Residue Asp-311 is the Proton acceptor of the active site. Phosphoenolpyruvate-binding residues include Arg-342 and Arg-384.

It belongs to the EPSP synthase family. Monomer.

The protein resides in the cytoplasm. It carries out the reaction 3-phosphoshikimate + phosphoenolpyruvate = 5-O-(1-carboxyvinyl)-3-phosphoshikimate + phosphate. It functions in the pathway metabolic intermediate biosynthesis; chorismate biosynthesis. Catalyzes the transfer of the enolpyruvyl moiety of phosphoenolpyruvate (PEP) to the 5-hydroxyl of shikimate-3-phosphate (S3P) to produce enolpyruvyl shikimate-3-phosphate and inorganic phosphate. In Methanococcus maripaludis (strain DSM 14266 / JCM 13030 / NBRC 101832 / S2 / LL), this protein is 3-phosphoshikimate 1-carboxyvinyltransferase.